Here is a 334-residue protein sequence, read N- to C-terminus: Phosphate acyltransferase (334 aa).

It belongs to the PlsX family. Homodimer. Probably interacts with PlsY.

The protein resides in the cytoplasm. The catalysed reaction is a fatty acyl-[ACP] + phosphate = an acyl phosphate + holo-[ACP]. It functions in the pathway lipid metabolism; phospholipid metabolism. Functionally, catalyzes the reversible formation of acyl-phosphate (acyl-PO(4)) from acyl-[acyl-carrier-protein] (acyl-ACP). This enzyme utilizes acyl-ACP as fatty acyl donor, but not acyl-CoA. This is Phosphate acyltransferase from Clostridium kluyveri (strain NBRC 12016).